The following is a 2778-amino-acid chain: Probable ubiquitin carboxyl-terminal hydrolase FAF (2778 aa).

The interval 1-85 (MTFDTRRHTT…SQSSDDVAAS (85 aa)) is disordered. The segment covering 10–39 (TGQPGSTAPSSSSSTTSTTTTTTSPAQSAG) has biased composition (low complexity). Residues 71–85 (QPATDSQSSDDVAAS) show a composition bias toward polar residues. Serine 924 is modified (phosphoserine). The tract at residues 1065–1094 (GTGLASSPDSSSDSSTGSPPRPCPDMQRVE) is disordered. Low complexity predominate over residues 1070–1082 (SSPDSSSDSSTGS). The 395-residue stretch at 1668–2062 (CGLKNAGATC…NAYMLFYTRC (395 aa)) folds into the USP domain. The Nucleophile role is filled by cysteine 1677. Histidine 1986 serves as the catalytic Proton acceptor. Disordered regions lie at residues 2568 to 2632 (VSEK…GDSN) and 2644 to 2691 (AYTS…INGL). Low complexity-rich tracts occupy residues 2614-2627 (TPTT…AWPA) and 2644-2671 (AYTS…GSGA). Residues 2672–2691 (NSETESSAQETTGETTINGL) are compositionally biased toward polar residues.

It belongs to the peptidase C19 family. In terms of assembly, interacts with imd. Ubiquitinated. Ubiquitination is enhanced by the expression of imd. As to expression, eye disks and ovaries. Expressed in larval fat body.

It catalyses the reaction Thiol-dependent hydrolysis of ester, thioester, amide, peptide and isopeptide bonds formed by the C-terminal Gly of ubiquitin (a 76-residue protein attached to proteins as an intracellular targeting signal).. Its function is as follows. Ubiquitin C-terminal hydrolase involved in development and the imd/NF-kappa-B (IMD) signaling cascade. Required for eye and embryo development, and plays a role in compound eye assembly and oogenesis respectively. In the larval eye disks, cells outside the assembling facets require this protein for short-range cell interactions that prevent the mystery cells from becoming photoreceptors. Also required for nuclear migration and cellularization in early embryogenesis and could play a role in pole cell determination, development or function. Regulates the IMD signaling cascade at later stages of infection (around 6 hours post-infection) by inhibiting the expression of the antimicrobial peptides Dpt and Dro. Acts by modulating the state of imd polyubiquitination and/or stability; a function which appears to be independent of its enzymatic activity. In turn, imd enhances the polyubiquitination and stability of faf suggesting that they may form a regulatory feedback mechanism within the Imd pathway. The chain is Probable ubiquitin carboxyl-terminal hydrolase FAF (faf) from Drosophila melanogaster (Fruit fly).